Reading from the N-terminus, the 396-residue chain is Phosphopentomutase (396 aa).

6 residues coordinate Mn(2+): D13, D288, H293, D329, H330, and H341.

Belongs to the phosphopentomutase family. Mn(2+) serves as cofactor.

The protein resides in the cytoplasm. The catalysed reaction is 2-deoxy-alpha-D-ribose 1-phosphate = 2-deoxy-D-ribose 5-phosphate. It catalyses the reaction alpha-D-ribose 1-phosphate = D-ribose 5-phosphate. Its pathway is carbohydrate degradation; 2-deoxy-D-ribose 1-phosphate degradation; D-glyceraldehyde 3-phosphate and acetaldehyde from 2-deoxy-alpha-D-ribose 1-phosphate: step 1/2. Its function is as follows. Isomerase that catalyzes the conversion of deoxy-ribose 1-phosphate (dRib-1-P) and ribose 1-phosphate (Rib-1-P) to deoxy-ribose 5-phosphate (dRib-5-P) and ribose 5-phosphate (Rib-5-P), respectively. The protein is Phosphopentomutase of Clostridium botulinum (strain Alaska E43 / Type E3).